We begin with the raw amino-acid sequence, 746 residues long: MGNNENGGISFCVFVVVIGFGTGAVAQEPANQSEAVTSLEEIVVTGGRSAQQISEIARTIYVVDSDQIQAEARSGKTLQQILGETIPSFDPASDGARTSFGQNLRGRPPLILVDGVSMNSARSLSRQFDAIDPFNIERVEVLSGATAIYGGNATGGIINIITKKGKDAEPGLHAEVTGGMGSGFAGSQDFDRNAAGAVTYNSENWDARLSIAGNRTGAFYDGSGTLLIPDITQTSTAFNERIDLMGSIGYQIDDDRRVEFSGQYFDSKQDSDYGLYYGPFFAALADPSLFETRSGYESDFNPQTRRSMLNVTYTDNDVFGQQLLLQGSYRTERIKFHPFPASGNSETGPYFYGSSQDTDYYGIRAALVAEPTDALKITYGIDADMDSFTARQNIFDMVAAGQSGGLDFNTIGKTGLYPSIDVSTVAGFAEASYEATDRLTLNGGVRYQFVNTEVSDFIGAAQQVAILQGRATSADTIPGGEVNYDAALFSAGATYQLTNTQQVYANFSQGFELPDPAKYYGIGNYSFSGGHYTLVNSVNVGDSALEAIKTNSFEIGYRLDDGTFNLETAAYYSLSDRSINLNRSSLAVEIIDRERRVYGIEGKAGVKLDHGFDVGVLGHWVRTEVKGADGWEKDSVGSASVSKLGGYVGWTNDALSLRFSGQHIFELTDAQNFTIDDYTLFDLTGGYRFENTDTTLNFGIHNVFDTDYTTVWGSRAKALYGGLADESVFDYKGRGRTFAVSLTKVF.

The N-terminal stretch at 1–26 (MGNNENGGISFCVFVVVIGFGTGAVA) is a signal peptide. The TonB box signature appears at 40–47 (EEIVVTGG). Positions 52–163 (QISEIARTIY…TGGIINIITK (112 aa)) constitute a TBDR plug domain. The TBDR beta-barrel domain occupies 169–746 (EPGLHAEVTG…TFAVSLTKVF (578 aa)). The TonB C-terminal box motif lies at 729–746 (FDYKGRGRTFAVSLTKVF).

Belongs to the TonB-dependent receptor family.

The protein resides in the cell outer membrane. Its function is as follows. Receptor for the siderophore rhizobactin. This chain is Rhizobactin receptor (rhtA), found in Rhizobium meliloti (strain 1021) (Ensifer meliloti).